The following is a 156-amino-acid chain: SsrA-binding protein (156 aa).

This sequence belongs to the SmpB family.

It localises to the cytoplasm. Its function is as follows. Required for rescue of stalled ribosomes mediated by trans-translation. Binds to transfer-messenger RNA (tmRNA), required for stable association of tmRNA with ribosomes. tmRNA and SmpB together mimic tRNA shape, replacing the anticodon stem-loop with SmpB. tmRNA is encoded by the ssrA gene; the 2 termini fold to resemble tRNA(Ala) and it encodes a 'tag peptide', a short internal open reading frame. During trans-translation Ala-aminoacylated tmRNA acts like a tRNA, entering the A-site of stalled ribosomes, displacing the stalled mRNA. The ribosome then switches to translate the ORF on the tmRNA; the nascent peptide is terminated with the 'tag peptide' encoded by the tmRNA and targeted for degradation. The ribosome is freed to recommence translation, which seems to be the essential function of trans-translation. In Clostridium perfringens (strain 13 / Type A), this protein is SsrA-binding protein.